Here is a 444-residue protein sequence, read N- to C-terminus: Homogentisate 1,2-dioxygenase (444 aa).

Histidine 298 (proton acceptor) is an active-site residue. Fe cation contacts are provided by histidine 341 and glutamate 347. Homogentisate contacts are provided by tyrosine 356 and histidine 377. Histidine 377 serves as a coordination point for Fe cation.

Belongs to the homogentisate dioxygenase family. As to quaternary structure, hexamer; dimer of trimers. Fe cation is required as a cofactor.

The catalysed reaction is homogentisate + O2 = 4-maleylacetoacetate + H(+). It functions in the pathway amino-acid degradation; L-phenylalanine degradation; acetoacetate and fumarate from L-phenylalanine: step 4/6. Functionally, involved in the catabolism of homogentisate (2,5-dihydroxyphenylacetate or 2,5-OH-PhAc), a central intermediate in the degradation of phenylalanine and tyrosine. Catalyzes the oxidative ring cleavage of the aromatic ring of homogentisate to yield maleylacetoacetate. In Burkholderia ambifaria (strain MC40-6), this protein is Homogentisate 1,2-dioxygenase.